We begin with the raw amino-acid sequence, 786 residues long: Receptor-interacting serine/threonine-protein kinase 4 (786 aa).

One can recognise a Protein kinase domain in the interval 22 to 286 (FAGWEKVGSG…QEITSETEDL (265 aa)). Residues 28–36 (VGSGGFGQV) and lysine 51 each bind ATP. Residue lysine 51 forms a Glycyl lysine isopeptide (Lys-Gly) (interchain with G-Cter in ubiquitin) linkage. Aspartate 143 serves as the catalytic Proton acceptor. Lysine 145 participates in a covalent cross-link: Glycyl lysine isopeptide (Lys-Gly) (interchain with G-Cter in ubiquitin). Disordered regions lie at residues 293–328 (EVKD…APPF) and 347–378 (QTLE…GVSS). The span at 295–319 (KDLAHEPGEKSSLESKSEARPESSR) shows a compositional bias: basic and acidic residues. Residues 357-378 (RSSSECKLPSSSSGKRLSGVSS) show a composition bias toward low complexity. 10 ANK repeats span residues 439 to 468 (SSAS…NPNL), 472 to 501 (KGST…SVNA), 505 to 534 (DQWT…SVNE), 538 to 567 (EGRT…DVGL), 571 to 601 (DAWL…SVNA), 605 to 634 (DGRT…DVNI), 638 to 667 (QAQT…GKEA), 671 to 700 (EGYT…DVMA), 704 to 734 (LNQT…DLSD), and 736 to 765 (QGLS…HINL).

The protein belongs to the protein kinase superfamily. TKL Ser/Thr protein kinase family. As to quaternary structure, interacts with PRKCB. Interacts with TRAF1, TRAF2, TRAF3 and TRAF5. Interacts with BIRC2/c-IAP1, BIRC3/c-IAP2 and XIAP/BIRC4. Post-translationally, may be phosphorylated by MAP3K2 and MAP3K3. In terms of processing, proteolytically cleaved by during Fas-induced apoptosis. Cleavage at Asp-342 and Asp-380. Polyubiquitinated with 'Lys-48' and 'Lys-63'-linked chains by BIRC2/c-IAP1 and BIRC3/c-IAP2, leading to activation of NF-kappa-B. In terms of tissue distribution, expressed in the epidermis of the skin (at protein level). Ubiquitously expressed, with an abundant expression in the thymus, bone marrow, pro-B, pre-B and immature B cells and a weak expression in the spleen.

The protein localises to the cytoplasm. It is found in the membrane. It carries out the reaction L-seryl-[protein] + ATP = O-phospho-L-seryl-[protein] + ADP + H(+). It catalyses the reaction L-threonyl-[protein] + ATP = O-phospho-L-threonyl-[protein] + ADP + H(+). In terms of biological role, serine/threonine protein kinase. Required for embryonic skin development and correct skin homeostasis in adults, via phosphorylation of PKP1 and subsequent promotion of keratinocyte differentiation and cell adhesion. It is a direct transcriptional target of TP63. Plays a role in NF-kappa-B activation. This Mus musculus (Mouse) protein is Receptor-interacting serine/threonine-protein kinase 4 (Ripk4).